The primary structure comprises 268 residues: ClpXP adapter protein SpxH (268 aa).

The protein belongs to the SpxH family. In terms of assembly, interacts with Spx.

It localises to the cytoplasm. In terms of biological role, adapter protein required for efficient degradation of Spx by ClpXP under non-stress conditions. Interaction with Spx stabilizes Spx and exposes the C-terminus of Spx for recognition and proteolysis by ClpXP. The sequence is that of ClpXP adapter protein SpxH from Staphylococcus aureus (strain Mu3 / ATCC 700698).